The primary structure comprises 125 residues: Histone H1-like protein Hc1 (125 aa).

A disordered region spans residues 98-125 (TKAKVKPTKKAAPKTKVKTAKKTRSTKK). A compositionally biased stretch (basic residues) spans 100 to 125 (AKVKPTKKAAPKTKVKTAKKTRSTKK).

It belongs to the histone H1/H5 family. HCT subfamily.

Functionally, might have a role analogous to that of eukaryotic histone proteins. This is Histone H1-like protein Hc1 (hctA) from Chlamydia trachomatis serovar L2 (strain ATCC VR-902B / DSM 19102 / 434/Bu).